Reading from the N-terminus, the 105-residue chain is Protein U4 (105 aa).

Residues 5–25 (FLLFLLLLVLVINPSLVVNMV) traverse the membrane as a helical segment.

The protein belongs to the nanovirus U4 protein family.

It is found in the membrane. This chain is Protein U4 (DNA-U4), found in Faba bean necrotic yellows virus (isolate Egyptian EV1-93) (FBNYV).